Reading from the N-terminus, the 125-residue chain is Ribonuclease P protein component (125 aa).

Belongs to the RnpA family. In terms of assembly, consists of a catalytic RNA component (M1 or rnpB) and a protein subunit.

The catalysed reaction is Endonucleolytic cleavage of RNA, removing 5'-extranucleotides from tRNA precursor.. Its function is as follows. RNaseP catalyzes the removal of the 5'-leader sequence from pre-tRNA to produce the mature 5'-terminus. It can also cleave other RNA substrates such as 4.5S RNA. The protein component plays an auxiliary but essential role in vivo by binding to the 5'-leader sequence and broadening the substrate specificity of the ribozyme. The protein is Ribonuclease P protein component of Oleidesulfovibrio alaskensis (strain ATCC BAA-1058 / DSM 17464 / G20) (Desulfovibrio alaskensis).